Reading from the N-terminus, the 766-residue chain is Phosphoribosylformylglycinamidine synthase subunit PurL (766 aa).

Residue H46 is part of the active site. Residues Y49 and K88 each contribute to the ATP site. E90 is a Mg(2+) binding site. Residues 91-94 and R113 contribute to the substrate site; that span reads SHNH. The active-site Proton acceptor is H92. Position 114 (D114) interacts with Mg(2+). A substrate-binding site is contributed by Q237. A Mg(2+)-binding site is contributed by D265. Substrate is bound at residue 309-311; it reads ESQ. Residues D520 and G557 each contribute to the ATP site. N558 provides a ligand contact to Mg(2+). S560 is a binding site for substrate.

This sequence belongs to the FGAMS family. Monomer. Part of the FGAM synthase complex composed of 1 PurL, 1 PurQ and 2 PurS subunits.

It localises to the cytoplasm. The catalysed reaction is N(2)-formyl-N(1)-(5-phospho-beta-D-ribosyl)glycinamide + L-glutamine + ATP + H2O = 2-formamido-N(1)-(5-O-phospho-beta-D-ribosyl)acetamidine + L-glutamate + ADP + phosphate + H(+). It participates in purine metabolism; IMP biosynthesis via de novo pathway; 5-amino-1-(5-phospho-D-ribosyl)imidazole from N(2)-formyl-N(1)-(5-phospho-D-ribosyl)glycinamide: step 1/2. Its function is as follows. Part of the phosphoribosylformylglycinamidine synthase complex involved in the purines biosynthetic pathway. Catalyzes the ATP-dependent conversion of formylglycinamide ribonucleotide (FGAR) and glutamine to yield formylglycinamidine ribonucleotide (FGAM) and glutamate. The FGAM synthase complex is composed of three subunits. PurQ produces an ammonia molecule by converting glutamine to glutamate. PurL transfers the ammonia molecule to FGAR to form FGAM in an ATP-dependent manner. PurS interacts with PurQ and PurL and is thought to assist in the transfer of the ammonia molecule from PurQ to PurL. The polypeptide is Phosphoribosylformylglycinamidine synthase subunit PurL (Synechococcus sp. (strain JA-3-3Ab) (Cyanobacteria bacterium Yellowstone A-Prime)).